The chain runs to 141 residues: Nucleoside diphosphate kinase (141 aa).

ATP is bound by residues lysine 11, phenylalanine 59, arginine 87, threonine 93, arginine 104, and asparagine 114. Histidine 117 (pros-phosphohistidine intermediate) is an active-site residue.

Belongs to the NDK family. In terms of assembly, homotetramer. It depends on Mg(2+) as a cofactor.

Its subcellular location is the cytoplasm. The enzyme catalyses a 2'-deoxyribonucleoside 5'-diphosphate + ATP = a 2'-deoxyribonucleoside 5'-triphosphate + ADP. It carries out the reaction a ribonucleoside 5'-diphosphate + ATP = a ribonucleoside 5'-triphosphate + ADP. In terms of biological role, major role in the synthesis of nucleoside triphosphates other than ATP. The ATP gamma phosphate is transferred to the NDP beta phosphate via a ping-pong mechanism, using a phosphorylated active-site intermediate. The polypeptide is Nucleoside diphosphate kinase (Burkholderia mallei (strain NCTC 10247)).